The chain runs to 242 residues: Orotidine 5'-phosphate decarboxylase (242 aa).

Substrate-binding positions include Asp16, Lys37, 64-73, Thr128, Arg190, Gln199, Gly219, and Arg220; that span reads DLKFHDIPNT. Residue Lys66 is the Proton donor of the active site.

Belongs to the OMP decarboxylase family. Type 1 subfamily. As to quaternary structure, homodimer.

It carries out the reaction orotidine 5'-phosphate + H(+) = UMP + CO2. It participates in pyrimidine metabolism; UMP biosynthesis via de novo pathway; UMP from orotate: step 2/2. Functionally, catalyzes the decarboxylation of orotidine 5'-monophosphate (OMP) to uridine 5'-monophosphate (UMP). This Prochlorococcus marinus (strain AS9601) protein is Orotidine 5'-phosphate decarboxylase.